The sequence spans 767 residues: Probable ubiquitin carboxyl-terminal hydrolase creB (767 aa).

In terms of domain architecture, USP spans 49–462 (YGMENYGNTC…CAYVLFYQET (414 aa)). Residue Cys58 is the Nucleophile of the active site. Disordered stretches follow at residues 107 to 140 (EAEAQAEKQKAANAQRPGMPPNPQQKPEDKDSPE) and 232 to 263 (ASKQPPIEKSLPAPETADSVDQSSSTGSKTPN). Residues 250-263 (SVDQSSSTGSKTPN) are compositionally biased toward polar residues. Residue His413 is the Proton acceptor of the active site. Residues 490–767 (LKQNGFPQSP…LRKKSFSILS (278 aa)) are disordered. 2 stretches are compositionally biased toward low complexity: residues 540-554 (ESAPFSPLSPLSPLS) and 564-573 (ERVTTVATPP). Residues 574 to 641 (KNDALAKKER…ASKAEEDRRL (68 aa)) are a coiled coil. Positions 577-650 (ALAKKERARE…LSHENGKEKQ (74 aa)) are enriched in basic and acidic residues. Positions 656–667 (RLKRGSKSLSHR) are enriched in basic residues. The segment covering 690 to 700 (STLSQTGPTSE) has biased composition (polar residues). The span at 701-713 (QQQQQQQQQQQQQ) shows a compositional bias: low complexity. The span at 731 to 749 (TIREDEQVNHKDSKHERTG) shows a compositional bias: basic and acidic residues. Over residues 750–767 (HGKWRSFSLRKKSFSILS) the composition is skewed to basic residues.

Belongs to the peptidase C19 family. Interacts with creA, creC and qutD.

It catalyses the reaction Thiol-dependent hydrolysis of ester, thioester, amide, peptide and isopeptide bonds formed by the C-terminal Gly of ubiquitin (a 76-residue protein attached to proteins as an intracellular targeting signal).. Its function is as follows. Ubiquitin thioesterase component of the regulatory network controlling carbon source utilization through ubiquitination and deubiquitination involving creA, creB, creC, creD and acrB. Deubiquitinates the creA catabolic repressor and the quinate permease qutD. Also plays a role in response to carbon starvation and the control of extracellular proteases activity. The protein is Probable ubiquitin carboxyl-terminal hydrolase creB (creB) of Aspergillus fumigatus (strain CBS 144.89 / FGSC A1163 / CEA10) (Neosartorya fumigata).